The chain runs to 225 residues: Biosynthetic peptidoglycan transglycosylase (225 aa).

The chain crosses the membrane as a helical span at residues 12–32 (IWFVAWRFLLLFVIVLFLFRF).

The protein belongs to the glycosyltransferase 51 family.

Its subcellular location is the cell inner membrane. It carries out the reaction [GlcNAc-(1-&gt;4)-Mur2Ac(oyl-L-Ala-gamma-D-Glu-L-Lys-D-Ala-D-Ala)](n)-di-trans,octa-cis-undecaprenyl diphosphate + beta-D-GlcNAc-(1-&gt;4)-Mur2Ac(oyl-L-Ala-gamma-D-Glu-L-Lys-D-Ala-D-Ala)-di-trans,octa-cis-undecaprenyl diphosphate = [GlcNAc-(1-&gt;4)-Mur2Ac(oyl-L-Ala-gamma-D-Glu-L-Lys-D-Ala-D-Ala)](n+1)-di-trans,octa-cis-undecaprenyl diphosphate + di-trans,octa-cis-undecaprenyl diphosphate + H(+). Its pathway is cell wall biogenesis; peptidoglycan biosynthesis. Functionally, peptidoglycan polymerase that catalyzes glycan chain elongation from lipid-linked precursors. In Marinomonas sp. (strain MWYL1), this protein is Biosynthetic peptidoglycan transglycosylase.